A 288-amino-acid chain; its full sequence is MEGKEEDVRLGANRYSERQPIGTAAQGTEEKDYKEPPPAPLFEAEELTSWSFYRAGIAEFVATFLFLYISILTVMGVSKSSSKCATVGIQGIAWSFGGMIFALVYCTAGISGGHINPAVTFGLFLARKLSLTRALFYMVMQCLGAICGAGVVKGFQEGLYMGAGGGANAVNPGYTKGDGLGAEIVGTFVLVYTVFSATDAKRSARDSHVPILAPLPIGFAVFLVHLATIPITGTGINPARSLGAAIVYNRSHAWNDHWIFWVGPFIGAALAAIYHVVIIRALPFKSRD.

Residues 1-36 (MEGKEEDVRLGANRYSERQPIGTAAQGTEEKDYKEP) are disordered. The next 2 membrane-spanning stretches (helical) occupy residues 57-77 (IAEFVATFLFLYISILTVMGV) and 92-114 (IAWSFGGMIFALVYCTAGISGGH). The NPA 1 motif lies at 116–118 (NPA). 3 helical membrane passes run 135-155 (LFYMVMQCLGAICGAGVVKGF), 177-197 (GDGLGAEIVGTFVLVYTVFSA), and 211-231 (ILAPLPIGFAVFLVHLATIPI). An NPA 2 motif is present at residues 237–239 (NPA). Residues 259–279 (IFWVGPFIGAALAAIYHVVII) traverse the membrane as a helical segment.

Belongs to the MIP/aquaporin (TC 1.A.8) family. PIP (TC 1.A.8.11) subfamily. In terms of tissue distribution, highly expressed in roots and at lower levels in anthers and silks.

The protein resides in the cell membrane. Functionally, water channel required to facilitate the transport of water across cell membrane. The sequence is that of Aquaporin PIP1-5 (PIP1-5) from Zea mays (Maize).